The sequence spans 999 residues: Protein Smaug (999 aa).

Over residues 1-36 (MKYATGTDNAMTSGISGQTNNSNSASNEMQPTTSTP) the composition is skewed to polar residues. 2 disordered regions span residues 1 to 69 (MKYA…QSQP) and 329 to 349 (LCPASGSRSSRTNDWQTIAPP). 2 stretches are compositionally biased toward low complexity: residues 44–69 (TSTATTTATYANGNPNSNANPSQSQP) and 329–338 (LCPASGSRSS). Serine 564 and serine 575 each carry phosphoserine. The segment at 583–763 (EFKPNYIKFH…KDLKFKLSKM (181 aa)) is interaction with cup. The region spanning 600-654 (GIGLWLKSLRLHKYIELFKNMTYEEMLLITEDFLQSVGVTKGASHKLALCIDKLK) is the SAM domain. Disordered regions lie at residues 773 to 892 (HVKP…MQQM) and 955 to 977 (QQSQQQQQQRKLSGGVSSAEQQP). Composition is skewed to polar residues over residues 801–822 (KNGSNDRINNRKNSNDMLNFSL) and 854–864 (HQPQYKSSSYP). At serine 972 the chain carries Phosphoserine.

This sequence belongs to the SMAUG family. In terms of assembly, interacts with oskar (osk). Binds to the 3'-UTR of nanos (nos). Interacts with cup, which in turn recruits eIF4-E, leading to an indirect interaction between smg and eIF4-E that prevents mRNA translation. Forms a complex with aub, twin, AGO3, nanos mRNA and piRNAs that targets the nanos 3'-untranslated region, in early embryos. As to expression, at syncytial blastoderm, it is located throughout the bulk cytoplasm and pole plasm. By the time of cellularization, it concentrates at the posterior pole.

The protein resides in the cytoplasm. Functionally, translation regulator that binds to the 3'-UTR of specific mRNAs such as nanos (nos) and prevents their translation. Prevents translation of unlocalized nanos in the bulk cytoplasm via the recruitment of cup. This Drosophila melanogaster (Fruit fly) protein is Protein Smaug (smg).